A 161-amino-acid chain; its full sequence is Nucleotide-binding protein RSc2549 (161 aa).

The protein belongs to the YajQ family.

Its function is as follows. Nucleotide-binding protein. The polypeptide is Nucleotide-binding protein RSc2549 (Ralstonia nicotianae (strain ATCC BAA-1114 / GMI1000) (Ralstonia solanacearum)).